Consider the following 1056-residue polypeptide: MLYRVSGFYKRHTRNFTNIDYGYYIRNFIHHIASKIYPYAKVVLPNFRAAHYFYILTLVILGSILVYPVKTCAYIDVLFFTAGASTQAGLNTVNVNDLSLYQQIVLYLLATLATPIFIHGSLLFVRLYYFERHFDNIKERSLMDYRMRKSATLARLGSAPTMSSTRLNTFNNQVLGFQEREAEKGSSSSPQSSSSQTSQPVSTAYNDQGGNDIEHHSEPSDSDDDESGNGPVTFQEKIHFEEPQRPRSQRRHSRTDSGIKFSALPHPRRRKSIDPEDMYRSINMLQEHKKNQEAKSKGIQFLNIGSPVRRKSRSSNIEAFPEEDTNPSRGDEITPATNSVGTGNNDEDEDDILIIKPPIEIENSDEANPIFTKKKKLASQIQFKETPGKAKKWITTKTRKHYNPWTSKLKKTLSNSSKKGSLSVVPTDTEDDSEDEEYASIDSETSDISDNEHAADNAEGSDVDSVGSYEEDEDEDEHNSDDDDDGEGERRLGNGASLTKAQSHLVLPSKDETGGKKYTKRSNTLDTPQQNTSDGRKIRKKAPKRKTPRTQRNASFNQHSNVSIGDGSIENVDTNDSYQRLSRTMSGNYLSWTPTVGRNSTFIKLTDEQKEELGGIEYRAVKLLIKIIVVYYVGFNIIPGVMLSIWIYCMPHYKNLMISSSISPAWWAFFTSQSSFNDLGLTLTSNSMMSFNQNAFVQILCSFLIVIGNTGFPILLRFIIWVMFKTARPLSLYKESLGFLLDHPRRCFTLLFPSVPTWWLFFILVVLNGFDLVIFCILDLHDDTFKGVDMGYRVLNGLFQAFCTRTVGFSVMDLSQLHAATQVSYLIMMYISVLPIAISVRRTNVYEEQSLGVYAKENAEGVDESAPSNYVGSHLRNQLSYDLWYICLGLFIICIAEGKRLKEQDLRFSIFAVLFEIVSAYGTVGMSMGYPGVDCSLSGEFNVISKLVIIAMMIRGRHRGLPYTIDRAIMLPNAAMKRHDRLQEEHAINRHNTMERTTTLGRVATFGNGPIDGGNNLLTRAITNIEHRLRNRRDGRSESSTVSEDPRYVVRTVSEV.

The Cytoplasmic segment spans residues 1 to 46 (MLYRVSGFYKRHTRNFTNIDYGYYIRNFIHHIASKIYPYAKVVLPN). The helical transmembrane segment at 47–67 (FRAAHYFYILTLVILGSILVY) threads the bilayer. Residues 68-73 (PVKTCA) lie on the Extracellular side of the membrane. Residues 74 to 90 (YIDVLFFTAGASTQAGL) lie within the membrane without spanning it. Residues 91 to 99 (NTVNVNDLS) are Extracellular-facing. The chain crosses the membrane as a helical span at residues 100 to 122 (LYQQIVLYLLATLATPIFIHGSL). Over 123-622 (LFVRLYYFER…LGGIEYRAVK (500 aa)) the chain is Cytoplasmic. Disordered stretches follow at residues 180 to 276 (REAE…IDPE), 290 to 350 (KNQE…EDED), and 404 to 571 (PWTS…SIEN). Residues 186-203 (SSSSPQSSSSQTSQPVST) are compositionally biased toward low complexity. The span at 236-245 (EKIHFEEPQR) shows a compositional bias: basic and acidic residues. Residues 335-344 (PATNSVGTGN) are compositionally biased toward polar residues. Positions 412–423 (TLSNSSKKGSLS) are enriched in low complexity. Acidic residues-rich tracts occupy residues 428-449 (DTED…SDIS) and 469-487 (YEED…DDGE). The span at 521–533 (RSNTLDTPQQNTS) shows a compositional bias: polar residues. Residues 537–549 (KIRKKAPKRKTPR) are compositionally biased toward basic residues. The segment covering 553-563 (NASFNQHSNVS) has biased composition (polar residues). Residues 623 to 646 (LLIKIIVVYYVGFNIIPGVMLSIW) form a helical membrane-spanning segment. The Extracellular segment spans residues 647–665 (IYCMPHYKNLMISSSISPA). The stretch at 666 to 682 (WWAFFTSQSSFNDLGLT) is an intramembrane region. Topologically, residues 683 to 693 (LTSNSMMSFNQ) are extracellular. Residues 694–710 (NAFVQILCSFLIVIGNT) form a helical membrane-spanning segment. The Cytoplasmic portion of the chain corresponds to 711 to 754 (GFPILLRFIIWVMFKTARPLSLYKESLGFLLDHPRRCFTLLFPS). The helical transmembrane segment at 755–778 (VPTWWLFFILVVLNGFDLVIFCIL) threads the bilayer. The Extracellular portion of the chain corresponds to 779 to 793 (DLHDDTFKGVDMGYR). The stretch at 794 to 810 (VLNGLFQAFCTRTVGFS) is an intramembrane region. Residues 811–817 (VMDLSQL) are Extracellular-facing. Residues 818–841 (HAATQVSYLIMMYISVLPIAISVR) traverse the membrane as a helical segment. Residues 842-874 (RTNVYEEQSLGVYAKENAEGVDESAPSNYVGSH) lie on the Cytoplasmic side of the membrane. A helical transmembrane segment spans residues 875–896 (LRNQLSYDLWYICLGLFIICIA). At 897–909 (EGKRLKEQDLRFS) the chain is on the extracellular side. An intramembrane segment occupies 910–928 (IFAVLFEIVSAYGTVGMSM). Over 929 to 942 (GYPGVDCSLSGEFN) the chain is Extracellular. Residues 943-965 (VISKLVIIAMMIRGRHRGLPYTI) form a helical membrane-spanning segment. At 966–1056 (DRAIMLPNAA…RYVVRTVSEV (91 aa)) the chain is on the cytoplasmic side.

It belongs to the TrkH potassium transport family.

It localises to the cell membrane. It catalyses the reaction K(+)(in) = K(+)(out). The catalysed reaction is chloride(in) = chloride(out). With respect to regulation, TRK1-mediated chloride conductance is blocked by 4,4'-diisothiocyanatostilbene-2,2'-disulfonic acid. Its function is as follows. Potassium transporter that mediates K(+) influx, as well as Cl(-) efflux as a secondary function. TRK1 is the major K(+) uptake transporter that regulates membrane potential and intracellular pH. The TRK1-mediated Cl(-) efflux should serve as a Cl(-) detoxification route and may play a role in sustaining C.albicans on mammalian epithelial surfaces, or in physiological saline solutions such as saliva. Mediates candidacidal activities of cysteine-free peptides, but not of defensins. The hallmark of salivary gland-secreted histatin-5 (Hst 5) killing of C.albicans is the rapid efflux of cellular ATP and other small nucleotides and ions from the cell as well as concurrent intracellular uptake of propidium iodide (PI). TRK1 is the channel for Hst 5-induced killing and histatin-5 may directly or indirectly alter TRK1 function, allowing the efflux of larger anions, including ATP, and the influx of small cationic dyes, such as PI. The chain is Potassium transporter TRK1 from Candida albicans (strain SC5314 / ATCC MYA-2876) (Yeast).